The sequence spans 275 residues: Tropinone reductase-like 2 (275 aa).

17–41 (IITGGASGIGACTAELFHENGAKVV) contacts NAD(+). A substrate-binding site is contributed by S150. Y163 serves as the catalytic Proton acceptor.

The protein belongs to the short-chain dehydrogenases/reductases (SDR) family.

Its function is as follows. Has no tropinone reductase activity. In Erythroxylum coca (Coca plant), this protein is Tropinone reductase-like 2.